Consider the following 64-residue polypeptide: Large ribosomal subunit protein bL35 (64 aa).

The protein belongs to the bacterial ribosomal protein bL35 family.

The protein is Large ribosomal subunit protein bL35 of Shewanella sediminis (strain HAW-EB3).